The chain runs to 423 residues: D-tagatose-1,6-bisphosphate aldolase subunit GatZ (423 aa).

It belongs to the GatZ/KbaZ family. GatZ subfamily. As to quaternary structure, forms a complex with GatY.

Its pathway is carbohydrate metabolism; D-tagatose 6-phosphate degradation; D-glyceraldehyde 3-phosphate and glycerone phosphate from D-tagatose 6-phosphate: step 2/2. Its function is as follows. Component of the tagatose-1,6-bisphosphate aldolase GatYZ that is required for full activity and stability of the Y subunit. Could have a chaperone-like function for the proper and stable folding of GatY. When expressed alone, GatZ does not show any aldolase activity. Is involved in the catabolism of galactitol. In Salmonella enteritidis PT4 (strain P125109), this protein is D-tagatose-1,6-bisphosphate aldolase subunit GatZ.